A 751-amino-acid chain; its full sequence is Serine/threonine-protein kinase-like protein CCR4 (751 aa).

The first 31 residues, 1–31 (MALTISISCFSSYFVSLLLLVLSSFSFVCFS), serve as a signal peptide directing secretion. Residues 32 to 366 (LSTVSISHIS…NKTWSRRNIA (335 aa)) are Extracellular-facing. Asparagine 42, asparagine 51, asparagine 98, asparagine 243, asparagine 254, asparagine 283, and asparagine 357 each carry an N-linked (GlcNAc...) asparagine glycan. A helical membrane pass occupies residues 367–387 (FLVVGCVGTFSLLLVISFLIF). Topologically, residues 388–751 (KSHCRCRVHD…TETVSRSNTY (364 aa)) are cytoplasmic. One can recognise a Protein kinase domain in the interval 443–733 (FSVRFHLGIG…EVVSKLESAL (291 aa)). ATP-binding positions include 449–457 (LGIGSFGSV) and lysine 471. The active-site Proton acceptor is aspartate 579.

The protein belongs to the protein kinase superfamily. Ser/Thr protein kinase family. In terms of assembly, homodimer. Expressed in roots, leaves, especially in trichomes, shoot apical meristems (SAM), and, to a lower extent, in floral buds.

The protein resides in the membrane. The enzyme catalyses L-seryl-[protein] + ATP = O-phospho-L-seryl-[protein] + ADP + H(+). It catalyses the reaction L-threonyl-[protein] + ATP = O-phospho-L-threonyl-[protein] + ADP + H(+). The chain is Serine/threonine-protein kinase-like protein CCR4 (CCR4) from Arabidopsis thaliana (Mouse-ear cress).